The primary structure comprises 270 residues: Lipopolysaccharide core biosynthesis glycosyltransferase LpsC (270 aa).

The protein belongs to the glycosyltransferase 2 family. WaaE/KdtX subfamily.

It functions in the pathway bacterial outer membrane biogenesis; LPS core biosynthesis. The sequence is that of Lipopolysaccharide core biosynthesis glycosyltransferase LpsC (lpsC) from Rhizobium meliloti (strain 1021) (Ensifer meliloti).